The sequence spans 257 residues: tRNA pseudouridine synthase A (257 aa).

D43 functions as the Nucleophile in the catalytic mechanism. Y94 serves as a coordination point for substrate.

This sequence belongs to the tRNA pseudouridine synthase TruA family.

The enzyme catalyses uridine(38/39/40) in tRNA = pseudouridine(38/39/40) in tRNA. Formation of pseudouridine at positions 38, 39 and 40 in the anticodon stem and loop of transfer RNAs. This is tRNA pseudouridine synthase A from Pyrobaculum arsenaticum (strain DSM 13514 / JCM 11321 / PZ6).